The primary structure comprises 62 residues: Photosystem II reaction center protein Z (62 aa).

2 helical membrane passes run 8 to 28 (AVFA…VVFA) and 41 to 61 (FSGT…NSLI).

It belongs to the PsbZ family. PSII is composed of 1 copy each of membrane proteins PsbA, PsbB, PsbC, PsbD, PsbE, PsbF, PsbH, PsbI, PsbJ, PsbK, PsbL, PsbM, PsbT, PsbY, PsbZ, Psb30/Ycf12, at least 3 peripheral proteins of the oxygen-evolving complex and a large number of cofactors. It forms dimeric complexes.

The protein resides in the plastid. Its subcellular location is the chloroplast thylakoid membrane. May control the interaction of photosystem II (PSII) cores with the light-harvesting antenna, regulates electron flow through the 2 photosystem reaction centers. PSII is a light-driven water plastoquinone oxidoreductase, using light energy to abstract electrons from H(2)O, generating a proton gradient subsequently used for ATP formation. The polypeptide is Photosystem II reaction center protein Z (Vitis vinifera (Grape)).